The sequence spans 83 residues: Turripeptide Lol11.1 (83 aa).

Positions 1 to 27 (MARQMMTVGCLILIVVLLDMMVPVFNT) are cleaved as a signal peptide.

This sequence belongs to the conopeptide I2-like superfamily. Post-translationally, contains 4 disulfide bonds. Expressed by the venom duct.

Its subcellular location is the secreted. Acts as a neurotoxin by inhibiting voltage-gated potassium channels (Kv). In Iotyrris olangoensis (Sea snail), this protein is Turripeptide Lol11.1.